The sequence spans 307 residues: Protein FAM76A (307 aa).

2 disordered regions span residues 142-195 (QRKH…ESIT) and 287-307 (KQAA…ITSP). Polar residues predominate over residues 161–182 (SRLSGGSHYNSQKTLSTSSIQN). Residues 217–299 (IIAQLKEEVA…AALSKSKKSE (83 aa)) adopt a coiled-coil conformation.

Belongs to the FAM76 family.

This chain is Protein FAM76A (FAM76A), found in Bos taurus (Bovine).